A 284-amino-acid polypeptide reads, in one-letter code: Ribosomal RNA small subunit methyltransferase A (284 aa).

S-adenosyl-L-methionine contacts are provided by asparagine 27, leucine 29, glycine 54, glutamate 75, aspartate 100, and asparagine 125.

It belongs to the class I-like SAM-binding methyltransferase superfamily. rRNA adenine N(6)-methyltransferase family. RsmA subfamily.

Its subcellular location is the cytoplasm. It catalyses the reaction adenosine(1518)/adenosine(1519) in 16S rRNA + 4 S-adenosyl-L-methionine = N(6)-dimethyladenosine(1518)/N(6)-dimethyladenosine(1519) in 16S rRNA + 4 S-adenosyl-L-homocysteine + 4 H(+). Its function is as follows. Specifically dimethylates two adjacent adenosines (A1518 and A1519) in the loop of a conserved hairpin near the 3'-end of 16S rRNA in the 30S particle. May play a critical role in biogenesis of 30S subunits. The chain is Ribosomal RNA small subunit methyltransferase A from Protochlamydia amoebophila (strain UWE25).